The following is a 464-amino-acid chain: MAVYNYDVVVLGSGPAGEGAAMNAAKAGRKVAMVDSRRQVGGNCTHLGTIPSKALRHSVRQIMQFNTNPMFRAIGEPRWFSFPDVLKSAEKVISKQVASRTGYYARNRVDVFFGTGSFADEQTVEVVCPNGVVEKLVAKHIIIATGSRPYRPADIDFHHPRVYDSDTILSLSHTPRKLIVYGAGVIGCEYASIFSGLGVLVELVDNRGQLLSFLDSEISQALSYHFSNNNITVRHNEEYERVEGLDNGVVLHLKSGKKIKADALLWCNGRTGNTDRLGLENIGIKVNSRGQIEVDQAYRTSVPNIYGAGDVIGWPSLASAAHDQGRSAAGSIVDNGSWRFVDDVPTGIYTIPEISSIGKNEQELTQAKVPYEVGKAFFKSMARAQIAGEPQGMLKILFHRETLEILGVHCFGYQASEIVHIGQAIMNQPGEQNNLKYFVNTTFNYPTMAEAYRVAAYDGLNRLF.

35 to 44 (DSRRQVGGNC) serves as a coordination point for FAD.

The protein belongs to the class-I pyridine nucleotide-disulfide oxidoreductase family. FAD serves as cofactor.

It localises to the cytoplasm. The enzyme catalyses NAD(+) + NADPH = NADH + NADP(+). In terms of biological role, conversion of NADPH, generated by peripheral catabolic pathways, to NADH, which can enter the respiratory chain for energy generation. This chain is Soluble pyridine nucleotide transhydrogenase, found in Pseudomonas entomophila (strain L48).